The following is a 521-amino-acid chain: 2-isopropylmalate synthase (521 aa).

A Pyruvate carboxyltransferase domain is found at 12–274 (VIIFDTTLRD…WNKIDTTMLT (263 aa)). The Mn(2+) site is built by aspartate 21, histidine 209, histidine 211, and asparagine 245. The regulatory domain stretch occupies residues 398–521 (KLLSLTVIAG…DLPVPEAAAS (124 aa)).

It belongs to the alpha-IPM synthase/homocitrate synthase family. LeuA type 1 subfamily. As to quaternary structure, homodimer. Mn(2+) is required as a cofactor.

The protein localises to the cytoplasm. The enzyme catalyses 3-methyl-2-oxobutanoate + acetyl-CoA + H2O = (2S)-2-isopropylmalate + CoA + H(+). It functions in the pathway amino-acid biosynthesis; L-leucine biosynthesis; L-leucine from 3-methyl-2-oxobutanoate: step 1/4. Functionally, catalyzes the condensation of the acetyl group of acetyl-CoA with 3-methyl-2-oxobutanoate (2-ketoisovalerate) to form 3-carboxy-3-hydroxy-4-methylpentanoate (2-isopropylmalate). This chain is 2-isopropylmalate synthase, found in Rhodopseudomonas palustris (strain BisB18).